The primary structure comprises 307 residues: Cyclin-dependent kinase 5 activator 1 (307 aa).

S8 bears the Phosphoserine; by CDK5 mark. A disordered region spans residues 96-136 (STFAQPPPAQPPAPPANQLSGSQTGVSSSVKKAPHPSVTSA). A compositionally biased stretch (pro residues) spans 100–110 (QPPPAQPPAPP). The segment covering 112–125 (NQLSGSQTGVSSSV) has biased composition (polar residues). Position 138 is a phosphothreonine; by CDK5 (T138).

It belongs to the cyclin-dependent kinase 5 activator family. In terms of assembly, heterodimer composed of a catalytic subunit CDK5 and a regulatory subunit CDK5R1 (p25) and macromolecular complex composed of at least CDK5, CDK5R1 (p35) and CDK5RAP1 or CDK5RAP2 or CDK5RAP3. Only the heterodimer shows kinase activity. Interacts with EPHA4 and NGEF; may mediate the activation of NGEF by EPHA4. Interacts with RASGRF2. The complex p35/CDK5 interacts with CLOCK. Post-translationally, the p35 form is proteolytically cleaved by calpain, giving rise to the p25 form. P35 has a 5 to 10 fold shorter half-life compared to p25. The conversion results in deregulation of the CDK5 kinase: p25/CDK5 kinase displays an increased and altered tau phosphorylation in comparison to the p35/CDK5 kinase in vivo. Myristoylated. A proper myristoylation signal is essential for the proper distribution of p35. In terms of processing, phosphorylation at Ser-8 and Thr-138 by CDK5 prevents calpain-mediated proteolysis. Post-translationally, ubiquitinated, leading to its degradation: degradation of p35 by proteasome results in down-regulation of CDK5 activity. During this process, CDK5 phosphorylates p35 and induces its ubiquitination and subsequent degradation. Ubiquitinated by the CRL2(FEM1B) complex, which recognizes the -Gly-Leu-Asp-Arg C-degron at the C-terminus, leading to its degradation. As to expression, brain and neuron specific.

It localises to the cell membrane. Its subcellular location is the cell projection. The protein resides in the neuron projection. It is found in the nucleus. The protein localises to the cytoplasm. It localises to the perinuclear region. Its subcellular location is the perikaryon. P35 is a neuron specific activator of CDK5. The complex p35/CDK5 is required for neurite outgrowth and cortical lamination. Involved in dendritic spine morphogenesis by mediating the EFNA1-EPHA4 signaling. Activator of TPKII. The complex p35/CDK5 participates in the regulation of the circadian clock by modulating the function of CLOCK protein: phosphorylates CLOCK at 'Thr-451' and 'Thr-461' and regulates the transcriptional activity of the CLOCK-BMAL1 heterodimer in association with altered stability and subcellular distribution. The protein is Cyclin-dependent kinase 5 activator 1 (CDK5R1) of Spermophilus citellus (European ground squirrel).